We begin with the raw amino-acid sequence, 123 residues long: Con-ikot-ikot (123 aa).

The signal sequence occupies residues 1–18; sequence MAMNMSMTLCMFVMVVVA. Positions 19-37 are excised as a propeptide; it reads ATVIDSTQLQEPDLSRMRR. Cystine bridges form between C49–C80, C50–C89, C57–C72, C90–C118, and C96–C113.

In terms of assembly, homodimer; disulfide-linked. In terms of tissue distribution, expressed by the venom duct.

The protein localises to the secreted. Functionally, potently and selectively blocks the desensitization of ionotropic glutamate AMPA receptors (GRIA1, GRIA2, GRIA3 and GRIA4). Binds to a different site than does the drug cyclothiazide. The toxin acts like a straitjacket on the 'gating ring' of the ligand-binding domain (LBD) of the receptor. It does so by restraining the domains via both intra- and interdimer cross-links such that agonist-induced closure of the LBD 'clamshells' is transduced into an irislike expansion of the gating ring. Compared to other desensitization blockers, it is a poor stabilizer of the open channel because toxin-bound AMPA receptors undergo frequent brief closures. In vitro, application of the toxin to hippocampal slices causes a large and rapid increase in resting AMPA receptor-mediated current leading to neuronal death. This Conus striatus (Striated cone) protein is Con-ikot-ikot.